We begin with the raw amino-acid sequence, 212 residues long: Large ribosomal subunit protein uL3 (212 aa).

The interval 133-156 is disordered; sequence SMTHGSKNHRLPGSTGAGTTPGRV.

Belongs to the universal ribosomal protein uL3 family. As to quaternary structure, part of the 50S ribosomal subunit. Forms a cluster with proteins L14 and L19.

Its function is as follows. One of the primary rRNA binding proteins, it binds directly near the 3'-end of the 23S rRNA, where it nucleates assembly of the 50S subunit. This is Large ribosomal subunit protein uL3 from Crocosphaera subtropica (strain ATCC 51142 / BH68) (Cyanothece sp. (strain ATCC 51142)).